Reading from the N-terminus, the 304-residue chain is Ribonuclease Z (304 aa).

His61, His63, Asp65, His66, His138, Asp206, and His265 together coordinate Zn(2+). Asp65 functions as the Proton acceptor in the catalytic mechanism.

Belongs to the RNase Z family. In terms of assembly, homodimer. Zn(2+) serves as cofactor.

It catalyses the reaction Endonucleolytic cleavage of RNA, removing extra 3' nucleotides from tRNA precursor, generating 3' termini of tRNAs. A 3'-hydroxy group is left at the tRNA terminus and a 5'-phosphoryl group is left at the trailer molecule.. Functionally, zinc phosphodiesterase, which displays some tRNA 3'-processing endonuclease activity. Probably involved in tRNA maturation, by removing a 3'-trailer from precursor tRNA. This chain is Ribonuclease Z, found in Lachnoclostridium phytofermentans (strain ATCC 700394 / DSM 18823 / ISDg) (Clostridium phytofermentans).